Consider the following 731-residue polypeptide: MSRSEKLTGEHLAPEPAEMARLVAGTHHNPHGILGAHEYDDHTVIRAFRPHAVEVVALVGKDRFSLQHLDSGLFAVALPFVDLIDYRLQVTYEGCEPHTVADAYRFLPTLGEVDLHLFAEGRHERLWEVLGAHPRSFTTADGVVSGVSFAVWAPNAKGVSLIGEFNGWNGHEAPMRVLGPSGVWELFWPDFPCDGLYKFRVHGADGVVTDRADAFAFGTEVPQQTASRVTSSDYTWGDDDWMAGRALRNPVNEAMSTYEVHLGSWRPGLSYRQLARELTDYIVDQGFTHVELLPVAEHPFAGSWGYQVTSYYAPTSRFGTPDDFRALVDALHQAGIGVIVDWVPAHFPKDAWALGRFDGTPLYEHSDPKRGEQLDWGTYVFDFGRPEVRNFLVANALYWLQEFHIDGLRVDAVASMLYLDYSRPEGGWTPNVHGGRENLEAVQFLQEMNATAHKVAPGIVTIAEESTPWSGVTRPTNIGGLGFSMKWNMGWMHDTLDYVSRDPVYRSYHHHEMTFSMLYAFSENYVLPLSHDEVVHGKGTLWGRMPGNNHVKAAGLRSLLAYQWAHPGKQLLFMGQEFGQRAEWSEQRGLDWFQLDENGFSNGIQRLVRDINDIYRCHPALWSLDTTPEGYSWIDANDSANNVLSFMRYGSDGSVLACVFNFAGAEHRDYRLGLPRAGRWREVLNTDATIYHGSGIGNLGGVDATDDPWHGRPASAVLVLPPTSALWLTPA.

An intrachain disulfide couples cysteine 193 to cysteine 617. Aspartate 411 functions as the Nucleophile in the catalytic mechanism. Glutamate 464 (proton donor) is an active-site residue.

The protein belongs to the glycosyl hydrolase 13 family. GlgB subfamily. In terms of assembly, monomer.

It carries out the reaction Transfers a segment of a (1-&gt;4)-alpha-D-glucan chain to a primary hydroxy group in a similar glucan chain.. It participates in glycan biosynthesis; glycogen biosynthesis. The protein operates within capsule biogenesis; capsule polysaccharide biosynthesis. Functionally, essential enzyme that catalyzes the formation of the alpha-1,6-glucosidic linkages in glucan chains by scission of a 1,4-alpha-linked oligosaccharide from growing alpha-1,4-glucan chains and the subsequent attachment of the oligosaccharide to the alpha-1,6 position. Is involved in the biosynthesis of both glycogen and capsular alpha-D-glucan. The protein is 1,4-alpha-glucan branching enzyme GlgB (glgB) of Mycobacterium tuberculosis (strain CDC 1551 / Oshkosh).